We begin with the raw amino-acid sequence, 394 residues long: Proliferation-associated protein 2G4 (394 aa).

Serine 2 carries the post-translational modification N-acetylserine. Serine 2 carries the phosphoserine modification. Residues serine 2–leucine 48 form a necessary for nucleolar localization region. Residues leucine 46–alanine 54 form an RNA-binding region. Residue lysine 298 forms a Glycyl lysine isopeptide (Lys-Gly) (interchain with G-Cter in SUMO2) linkage. The necessary for nucleolar localization stretch occupies residues leucine 301 to aspartate 394. Serine 335 carries the post-translational modification Phosphoserine. The interval leucine 358–aspartate 394 is disordered. Residue serine 361 is modified to Phosphoserine; by PKC/PRKCD. An interaction with RNA region spans residues serine 361–serine 375. Over residues lysine 365–serine 375 the composition is skewed to basic residues. A phosphothreonine mark is found at threonine 366 and threonine 386.

Belongs to the peptidase M24 family. In terms of assembly, isoform 2 interacts with the cytoplasmic domain of non-phosphorylated ERBB3; the interaction requires PKC activity. Interacts with AR. Treatment with HRG leads to dissociation from ERBB3 and increases association with AR. Interacts with nucleolin/NCL. Component of a ribonucleoprotein complex containing at least PA2G4, NCL, TOP1, PABPC2, RPLP0, acetylated histone H1 (HIST1H1A or H1F1), histone H1 2/4, RPL4, RPL8, RPL15, RPL18, RPL18A, RPL21, RPL11, RPL12, RPL28, RPL27, RPLP2 and RPL24. Interacts with HDAC2. Interacts with RB1; the interaction is enhanced upon PA2G4 dephosphorylation. Interacts with AKT1. Isoform 1 and isoform 2 interact with RNF20. Isoform 2 interacts with HUWE1. Interacts with DNAJC21. Post-translationally, phosphorylated on serine and threonine residues. Phosphorylation is enhanced by HRG treatment. Basal phosphorylation is PKC-dependent and HRG-induced phosphorylation is predominantly PKC-independent. Phosphorylation at Ser-361 by PKC/PRKCD regulates its nucleolar localization. Isoform 2 is polyubiquitinated, leading to proteasomal degradation and phosphorylation by PKC/PRKCD enhances polyubiquitination. As to expression, widely expressed.

It localises to the cytoplasm. Its subcellular location is the nucleus. It is found in the nucleolus. In terms of biological role, may play a role in a ERBB3-regulated signal transduction pathway. Seems be involved in growth regulation. Acts a corepressor of the androgen receptor (AR) and is regulated by the ERBB3 ligand neuregulin-1/heregulin (HRG). Inhibits transcription of some E2F1-regulated promoters, probably by recruiting histone acetylase (HAT) activity. Binds RNA. Associates with 28S, 18S and 5.8S mature rRNAs, several rRNA precursors and probably U3 small nucleolar RNA. May be involved in regulation of intermediate and late steps of rRNA processing. May be involved in ribosome assembly. Mediates cap-independent translation of specific viral IRESs (internal ribosomal entry site). Together with PTBP1 is required for the translation initiation on the foot-and-mouth disease virus (FMDV) IRES. Regulates cell proliferation, differentiation, and survival. Isoform 1 suppresses apoptosis whereas isoform 2 promotes cell differentiation. This is Proliferation-associated protein 2G4 (Pa2g4) from Mus musculus (Mouse).